A 465-amino-acid chain; its full sequence is UDP-N-acetylmuramate--L-alanine ligase (465 aa).

Residue 114–120 (GAHGKTT) participates in ATP binding.

This sequence belongs to the MurCDEF family.

Its subcellular location is the cytoplasm. It catalyses the reaction UDP-N-acetyl-alpha-D-muramate + L-alanine + ATP = UDP-N-acetyl-alpha-D-muramoyl-L-alanine + ADP + phosphate + H(+). It participates in cell wall biogenesis; peptidoglycan biosynthesis. Functionally, cell wall formation. This chain is UDP-N-acetylmuramate--L-alanine ligase, found in Syntrophomonas wolfei subsp. wolfei (strain DSM 2245B / Goettingen).